The sequence spans 248 residues: Carbohydrate deacetylase (248 aa).

Residues His-59 and His-121 each coordinate Mg(2+).

The protein belongs to the YdjC deacetylase family. The cofactor is Mg(2+).

Probably catalyzes the deacetylation of acetylated carbohydrates an important step in the degradation of oligosaccharides. The protein is Carbohydrate deacetylase of Brevibacillus brevis (strain 47 / JCM 6285 / NBRC 100599).